A 517-amino-acid chain; its full sequence is Phenol 2-monooxygenase, oxygenase component DmpN (517 aa).

Fe cation-binding residues include Glu109, Glu139, His142, Glu200, Glu234, and His237.

Belongs to the TmoA/XamoA family. As to quaternary structure, the multicomponent enzyme phenol hydroxylase is formed by DmpL (P1 component), DmpM (P2 component), DmpN (P3 component), DmpO (P4 component) and DmpP (P5 component). The oxygenase component is a dimer composed of three subunits, DmpL, DmpN and DmpO (DmpLNO). DmpN interacts with the auxiliary protein DmpK (P0 component). Fe(2+) serves as cofactor.

The enzyme catalyses phenol + NADH + O2 + H(+) = catechol + NAD(+) + H2O. The protein operates within aromatic compound metabolism; phenol degradation. Requires DmpM for efficient turnover. The activity of DmpLNO oxygenase is inhibited by dithiothreitol (DTT) by a mechanism apparently involving H(2)O(2) generation. Functionally, part of a multicomponent enzyme which catalyzes the degradation of phenol and some of its methylated derivatives. DmpL, DmpN and DmpO form the oxygenase component of the complex. Required for growth on phenol and for in vitro phenol hydroxylase activity. The sequence is that of Phenol 2-monooxygenase, oxygenase component DmpN from Pseudomonas sp. (strain CF600).